The chain runs to 75 residues: Large ribosomal subunit protein bL28 (75 aa).

The protein belongs to the bacterial ribosomal protein bL28 family.

The sequence is that of Large ribosomal subunit protein bL28 from Buchnera aphidicola subsp. Acyrthosiphon pisum (strain 5A).